The following is a 236-amino-acid chain: Carboxymethylenebutenolidase (236 aa).

Active-site residues include C123, D171, and H202.

It belongs to the dienelactone hydrolase family. As to quaternary structure, monomer.

It catalyses the reaction 2-(5-oxo-2,5-dihydrofuran-2-ylidene)acetate + H2O = 4-oxohex-2-enedioate + H(+). It participates in aromatic compound metabolism; 3-chlorocatechol degradation. Functionally, ring cleavage of cyclic ester dienelactone to produce maleylacetate. The chain is Carboxymethylenebutenolidase (clcD) from Pseudomonas knackmussii (strain DSM 6978 / CCUG 54928 / LMG 23759 / B13).